We begin with the raw amino-acid sequence, 61 residues long: [Val1,Thr6]-bradykinyl-Val,Asp (61 aa).

An N-terminal signal peptide occupies residues 1 to 22 (MAFLKKSLFLVLFLGVVSLSFC). Positions 23 to 48 (EEEEREEHEEEKREAEAAESAENLIS) are excised as a propeptide. The segment at 27–61 (REEHEEEKREAEAAESAENLISKRVPPGFTPFRVD) is disordered.

Expressed by the skin glands. Expression levels in inguinal glands and granular glands are virtually the same.

Its subcellular location is the secreted. Induces contraction of rat ileum smooth muscle (EC(50)=2.73 uM) but has no activity towards rat smooth muscle from tail artery, urinary bladder or uterus. Binds to both bradykinin receptor B1 (BDKRB1) and B2 (BDKRB2); the effect via BDKRB1 is stronger. This is [Val1,Thr6]-bradykinyl-Val,Asp from Physalaemus nattereri (Cuyaba dwarf frog).